We begin with the raw amino-acid sequence, 150 residues long: Transcription antitermination protein NusB (150 aa).

Belongs to the NusB family.

Involved in transcription antitermination. Required for transcription of ribosomal RNA (rRNA) genes. Binds specifically to the boxA antiterminator sequence of the ribosomal RNA (rrn) operons. The polypeptide is Transcription antitermination protein NusB (Streptococcus pyogenes serotype M2 (strain MGAS10270)).